The chain runs to 345 residues: S-adenosylmethionine:tRNA ribosyltransferase-isomerase (345 aa).

This sequence belongs to the QueA family. Monomer.

The protein resides in the cytoplasm. The enzyme catalyses 7-aminomethyl-7-carbaguanosine(34) in tRNA + S-adenosyl-L-methionine = epoxyqueuosine(34) in tRNA + adenine + L-methionine + 2 H(+). Its pathway is tRNA modification; tRNA-queuosine biosynthesis. Transfers and isomerizes the ribose moiety from AdoMet to the 7-aminomethyl group of 7-deazaguanine (preQ1-tRNA) to give epoxyqueuosine (oQ-tRNA). The chain is S-adenosylmethionine:tRNA ribosyltransferase-isomerase from Helicobacter pylori (strain G27).